A 110-amino-acid polypeptide reads, in one-letter code: Large ribosomal subunit protein uL22 (110 aa).

Belongs to the universal ribosomal protein uL22 family. Part of the 50S ribosomal subunit.

In terms of biological role, this protein binds specifically to 23S rRNA; its binding is stimulated by other ribosomal proteins, e.g. L4, L17, and L20. It is important during the early stages of 50S assembly. It makes multiple contacts with different domains of the 23S rRNA in the assembled 50S subunit and ribosome. Functionally, the globular domain of the protein is located near the polypeptide exit tunnel on the outside of the subunit, while an extended beta-hairpin is found that lines the wall of the exit tunnel in the center of the 70S ribosome. The protein is Large ribosomal subunit protein uL22 of Verminephrobacter eiseniae (strain EF01-2).